The chain runs to 327 residues: Malate dehydrogenase (327 aa).

11-17 (GAAGQIS) contributes to the NAD(+) binding site. Residues Arg92 and Arg98 each contribute to the substrate site. Residues Asn105, Gln112, and 129 to 131 (VGN) each bind NAD(+). Substrate is bound by residues Asn131 and Arg162. His187 (proton acceptor) is an active-site residue.

This sequence belongs to the LDH/MDH superfamily. MDH type 2 family.

The catalysed reaction is (S)-malate + NAD(+) = oxaloacetate + NADH + H(+). In terms of biological role, catalyzes the reversible oxidation of malate to oxaloacetate. The protein is Malate dehydrogenase of Saccharophagus degradans (strain 2-40 / ATCC 43961 / DSM 17024).